Here is a 204-residue protein sequence, read N- to C-terminus: V-set and transmembrane domain-containing protein 2-like protein (204 aa).

A signal peptide spans 1 to 24 (MGAPLAVALGALHYLALFLQLGGA). Residues 41 to 158 (ALFTETPHDM…DGKARHHKVK (118 aa)) form the Ig-like domain. A disulfide bond links Cys62 and Cys142. Residues 168 to 204 (NSVLHLPEAPPAAPAPPPPKPGKELRKRSVDQEACSL) are disordered. Over residues 175–187 (EAPPAAPAPPPPK) the composition is skewed to pro residues. Residues 188–198 (PGKELRKRSVD) show a composition bias toward basic and acidic residues.

This is V-set and transmembrane domain-containing protein 2-like protein (VSTM2L) from Homo sapiens (Human).